The sequence spans 421 residues: MFSFFRRKKKQETPAPEEAQIQETVAKVESEVAQIVENIKEDAESLAESVKGQVESAVETVSGAVEQVKETVAEMLSEAEEAAEKAAEQVEAAKEAVAETVGEAVGQVQEAVATTEEHKLGWAARLKQGLTKSRDKMAKSLAGVFGGGQIDEDLYEELETVLITSDMDMEATEYLMKDVRDRVSLKGLKDGNELRGALKEALYDLIKPLEKPLVLPETKEPFVIMLAGINGAGKTTSIGKLAKYFQAQGKSVLLAAGDTFRAAAREQLQAWGERNNVTVISQTTGDSAAVCFDAVQAAKARGIDIVLADTAGRLPTQLHLMEEIKKVKRVLQKAMPDAPHEIIVVLDANIGQNAVNQVKAFDDALGLTGLIVTKLDGTAKGGILAALASDRPVPVRYIGVGEGIDDLRPFDARAFVDALLD.

Positions 1 to 10 (MFSFFRRKKK) are enriched in basic residues. A disordered region spans residues 1–22 (MFSFFRRKKKQETPAPEEAQIQ). GTP contacts are provided by residues 228–235 (GINGAGKT), 309–313 (DTAGR), and 373–376 (TKLD).

The protein belongs to the GTP-binding SRP family. FtsY subfamily. Part of the signal recognition particle protein translocation system, which is composed of SRP and FtsY. SRP is a ribonucleoprotein composed of Ffh and a 4.5S RNA molecule.

The protein localises to the cell membrane. It is found in the cytoplasm. The enzyme catalyses GTP + H2O = GDP + phosphate + H(+). In terms of biological role, involved in targeting and insertion of nascent membrane proteins into the cytoplasmic membrane. Acts as a receptor for the complex formed by the signal recognition particle (SRP) and the ribosome-nascent chain (RNC). Interaction with SRP-RNC leads to the transfer of the RNC complex to the Sec translocase for insertion into the membrane, the hydrolysis of GTP by both Ffh and FtsY, and the dissociation of the SRP-FtsY complex into the individual components. In Neisseria meningitidis serogroup C, this protein is Signal recognition particle receptor FtsY.